Here is a 437-residue protein sequence, read N- to C-terminus: Chloride intracellular channel protein 5 (437 aa).

Residues 1 to 14 show a composition bias toward polar residues; sequence MNDENYSTTIYNRV. The interval 1-197 is disordered; sequence MNDENYSTTI…VSEGNESASA (197 aa). Residues 34-45 show a composition bias toward basic and acidic residues; that stretch reads DEVHEDVRREDN. 4 consecutive repeat copies span residues 118–125, 126–133, 134–141, and 142–149. The segment at 118 to 149 is 4 X 8 AA tandem repeats of [AGQ]-[SP]-D-[PS]-E-E-P-Q; that stretch reads QSDSEEPQASDPEEPQASDPEEPQGPDPEEPQ. Residues 121-157 are compositionally biased toward acidic residues; it reads SEEPQASDPEEPQASDPEEPQGPDPEEPQENGNEMEA. The segment covering 161–184 has biased composition (polar residues); that stretch reads SPSSFTIQNSRAFSTREISPTSYS. Residues 217–220 carry the G-site motif; sequence CPFS. A helical membrane pass occupies residues 219-239; it reads FSQRLFMILWLKGVVFNVTTV. Residues 263 to 427 form the GST C-terminal domain; that stretch reads NGDVKTDVNK…AADSEIELAY (165 aa).

This sequence belongs to the chloride channel CLIC family. In terms of assembly, component of a multimeric complex consisting of several cytoskeletal proteins, including actin, ezrin, alpha-actinin, gelsolin, and IQGAP1. Interacts with AKAP9. Interacts with TPRN. TPRN, CLIC5 and PTPQR form concentric rings at the base of stereocilia and may form a complex. Interacts with EZR, MYO6 and RDX; the proteins may work together as a complex to stabilize linkages between the plasma membrane and subjacent actin cytoskeleton at the stereocilium base. Post-translationally, phosphorylated. In terms of tissue distribution, expressed in most tissues. Higher levels found in kidney, heart, skeletal muscle, T84 and PANC-1 cells.

It is found in the golgi apparatus. The protein resides in the cytoplasm. It localises to the cytoskeleton. Its subcellular location is the microtubule organizing center. The protein localises to the centrosome. It is found in the cell cortex. The protein resides in the membrane. It localises to the apical cell membrane. Its subcellular location is the mitochondrion. The protein localises to the cell projection. It is found in the stereocilium. The catalysed reaction is Na(+)(in) = Na(+)(out). The enzyme catalyses K(+)(in) = K(+)(out). It carries out the reaction chloride(in) = chloride(out). With respect to regulation, inhibited by F-actin. Its function is as follows. In the soluble state, catalyzes glutaredoxin-like thiol disulfide exchange reactions with reduced glutathione as electron donor. Can insert into membranes and form non-selective ion channels almost equally permeable to Na(+), K(+) and Cl(-). Required for normal hearing. It is necessary for the formation of stereocilia in the inner ear and normal development of the organ of Corti. May play a role in the regulation of transepithelial ion absorption and secretion. Is required for the development and/or maintenance of the proper glomerular endothelial cell and podocyte architecture. Plays a role in formation of the lens suture in the eye, which is important for normal optical properties of the lens. In Bos taurus (Bovine), this protein is Chloride intracellular channel protein 5 (CLIC5).